The primary structure comprises 167 residues: Large ribosomal subunit protein uL10 (167 aa).

Belongs to the universal ribosomal protein uL10 family. In terms of assembly, part of the ribosomal stalk of the 50S ribosomal subunit. The N-terminus interacts with L11 and the large rRNA to form the base of the stalk. The C-terminus forms an elongated spine to which L12 dimers bind in a sequential fashion forming a multimeric L10(L12)X complex.

In terms of biological role, forms part of the ribosomal stalk, playing a central role in the interaction of the ribosome with GTP-bound translation factors. This Lactiplantibacillus plantarum (strain ATCC BAA-793 / NCIMB 8826 / WCFS1) (Lactobacillus plantarum) protein is Large ribosomal subunit protein uL10.